Here is a 364-residue protein sequence, read N- to C-terminus: UDP-N-acetylglucosamine--N-acetylmuramyl-(pentapeptide) pyrophosphoryl-undecaprenol N-acetylglucosamine transferase (364 aa).

Residues 15 to 17 (TGG), N123, R164, S191, and Q286 contribute to the UDP-N-acetyl-alpha-D-glucosamine site.

The protein belongs to the glycosyltransferase 28 family. MurG subfamily.

Its subcellular location is the cell inner membrane. It carries out the reaction di-trans,octa-cis-undecaprenyl diphospho-N-acetyl-alpha-D-muramoyl-L-alanyl-D-glutamyl-meso-2,6-diaminopimeloyl-D-alanyl-D-alanine + UDP-N-acetyl-alpha-D-glucosamine = di-trans,octa-cis-undecaprenyl diphospho-[N-acetyl-alpha-D-glucosaminyl-(1-&gt;4)]-N-acetyl-alpha-D-muramoyl-L-alanyl-D-glutamyl-meso-2,6-diaminopimeloyl-D-alanyl-D-alanine + UDP + H(+). The protein operates within cell wall biogenesis; peptidoglycan biosynthesis. Its function is as follows. Cell wall formation. Catalyzes the transfer of a GlcNAc subunit on undecaprenyl-pyrophosphoryl-MurNAc-pentapeptide (lipid intermediate I) to form undecaprenyl-pyrophosphoryl-MurNAc-(pentapeptide)GlcNAc (lipid intermediate II). The protein is UDP-N-acetylglucosamine--N-acetylmuramyl-(pentapeptide) pyrophosphoryl-undecaprenol N-acetylglucosamine transferase of Prochlorococcus marinus subsp. pastoris (strain CCMP1986 / NIES-2087 / MED4).